The chain runs to 566 residues: Oxygen-dependent choline dehydrogenase (566 aa).

Asp7–Glu36 is a binding site for FAD. Residues Asn180–Ser202 are disordered. The active-site Proton acceptor is the His474.

It belongs to the GMC oxidoreductase family. Requires FAD as cofactor.

It catalyses the reaction choline + A = betaine aldehyde + AH2. It carries out the reaction betaine aldehyde + NAD(+) + H2O = glycine betaine + NADH + 2 H(+). Its pathway is amine and polyamine biosynthesis; betaine biosynthesis via choline pathway; betaine aldehyde from choline (cytochrome c reductase route): step 1/1. Its function is as follows. Involved in the biosynthesis of the osmoprotectant glycine betaine. Catalyzes the oxidation of choline to betaine aldehyde and betaine aldehyde to glycine betaine at the same rate. In Burkholderia orbicola (strain MC0-3), this protein is Oxygen-dependent choline dehydrogenase.